The following is a 288-amino-acid chain: Alpha-acetolactate decarboxylase (288 aa).

The signal sequence occupies residues 1–23 (MNIKYFLIFLILLAVTSFTLFSG).

Belongs to the alpha-acetolactate decarboxylase family.

The enzyme catalyses (2S)-2-acetolactate + H(+) = (R)-acetoin + CO2. Its pathway is polyol metabolism; (R,R)-butane-2,3-diol biosynthesis; (R,R)-butane-2,3-diol from pyruvate: step 2/3. Functionally, converts acetolactate into acetoin. The polypeptide is Alpha-acetolactate decarboxylase (Methanosarcina mazei (strain ATCC BAA-159 / DSM 3647 / Goe1 / Go1 / JCM 11833 / OCM 88) (Methanosarcina frisia)).